The chain runs to 303 residues: Probable serine/threonine-protein kinase FPV212 (303 aa).

Residues 25 to 303 enclose the Protein kinase domain; that stretch reads WILGKQLGSG…NYESLKQMFL (279 aa). ATP-binding positions include 31–39 and K54; that span reads LGSGGFGLV. The Proton acceptor role is filled by D160.

This sequence belongs to the protein kinase superfamily. Ser/Thr protein kinase family. Poxviruses subfamily.

The enzyme catalyses L-seryl-[protein] + ATP = O-phospho-L-seryl-[protein] + ADP + H(+). It carries out the reaction L-threonyl-[protein] + ATP = O-phospho-L-threonyl-[protein] + ADP + H(+). This is Probable serine/threonine-protein kinase FPV212 from Vertebrata (FPV).